A 178-amino-acid polypeptide reads, in one-letter code: Inner membrane-spanning protein YciB (178 aa).

Helical transmembrane passes span 22–42 (IFVA…VSWL), 50–70 (MALF…ALHN), 76–96 (WKVT…HWFM), 121–141 (IAWA…AFWL), and 149–169 (FKVF…GIYI).

The protein belongs to the YciB family.

Its subcellular location is the cell inner membrane. Functionally, plays a role in cell envelope biogenesis, maintenance of cell envelope integrity and membrane homeostasis. This Erwinia tasmaniensis (strain DSM 17950 / CFBP 7177 / CIP 109463 / NCPPB 4357 / Et1/99) protein is Inner membrane-spanning protein YciB.